The sequence spans 246 residues: Ubiquinone biosynthesis O-methyltransferase (246 aa).

S-adenosyl-L-methionine-binding residues include arginine 44, glycine 63, aspartate 84, and methionine 128.

This sequence belongs to the methyltransferase superfamily. UbiG/COQ3 family.

It carries out the reaction a 3-demethylubiquinol + S-adenosyl-L-methionine = a ubiquinol + S-adenosyl-L-homocysteine + H(+). It catalyses the reaction a 3-(all-trans-polyprenyl)benzene-1,2-diol + S-adenosyl-L-methionine = a 2-methoxy-6-(all-trans-polyprenyl)phenol + S-adenosyl-L-homocysteine + H(+). Its pathway is cofactor biosynthesis; ubiquinone biosynthesis. Its function is as follows. O-methyltransferase that catalyzes the 2 O-methylation steps in the ubiquinone biosynthetic pathway. This chain is Ubiquinone biosynthesis O-methyltransferase, found in Xylella fastidiosa (strain Temecula1 / ATCC 700964).